The primary structure comprises 523 residues: Cytoplasmic dynein 1 light intermediate chain 1 (523 aa).

Residues Met1–Gly45 form a disordered region. Gly74–Thr81 lines the ATP pocket. Ser207 carries the post-translational modification Phosphoserine. Position 213 is a phosphothreonine (Thr213). Disordered stretches follow at residues Pro387–Met434 and Gly457–Ser523. Residues Ser398 and Ser405 each carry the phosphoserine modification. Phosphothreonine is present on Thr408. Residues Ser412, Ser419, Ser421, and Ser427 each carry the phosphoserine modification. A compositionally biased stretch (low complexity) spans Ser412–Ser421. Residues Ser458 to Ala473 show a composition bias toward gly residues. Residues Gly474–Ala483 show a composition bias toward low complexity. Phosphoserine occurs at positions 486 and 510. 2 positions are modified to phosphothreonine: Thr512 and Thr513. Ser516 carries the phosphoserine modification.

This sequence belongs to the dynein light intermediate chain family. In terms of assembly, homodimer. The cytoplasmic dynein 1 complex consists of two catalytic heavy chains (HCs) and a number of non-catalytic subunits presented by intermediate chains (ICs), light intermediate chains (LICs) and light chains (LCs); the composition seems to vary in respect to the IC, LIC and LC composition. The heavy chain homodimer serves as a scaffold for the probable homodimeric assembly of the respective non-catalytic subunits. The ICs and LICs bind directly to the HC dimer and the LCs assemble on the IC dimer. Self-associates. Interacts with DYNC1H1; DYNC1LI1 and DYNC1LI2 bind mutually exclusive to DYNC1H1. Interacts with PCNT. Forms a complex with RAB11FIP3 and RAB11A1; the interaction between DYNC1LI1 and RAB11FIP3 is direct and induces DYNC1LI1 localization onto endosomal membrane; the complex regulates endocytic trafficking. Interacts with RUFY3. Phosphorylated during mitosis but not in interphase.

It is found in the cytoplasm. The protein resides in the chromosome. The protein localises to the centromere. It localises to the kinetochore. Its subcellular location is the cytoskeleton. It is found in the spindle pole. The protein resides in the recycling endosome membrane. In terms of biological role, acts as one of several non-catalytic accessory components of the cytoplasmic dynein 1 complex that are thought to be involved in linking dynein to cargos and to adapter proteins that regulate dynein function. Cytoplasmic dynein 1 acts as a motor for the intracellular retrograde motility of vesicles and organelles along microtubules. May play a role in binding dynein to membranous organelles or chromosomes. Probably involved in the microtubule-dependent transport of pericentrin. Is required for progress through the spindle assembly checkpoint. The phosphorylated form appears to be involved in the selective removal of MAD1L1 and MAD1L2 but not BUB1B from kinetochores. Forms a functional Rab11/RAB11FIP3/dynein complex onto endosomal membrane that regulates the movement of peripheral sorting endosomes (SE) along microtubule tracks toward the microtubule organizing center/centrosome, generating the endosomal recycling compartment (ERC). This is Cytoplasmic dynein 1 light intermediate chain 1 (Dync1li1) from Rattus norvegicus (Rat).